The chain runs to 1081 residues: Zinc finger protein 827 (1081 aa).

Positions 1–10 (MPRRKQEQPK) are enriched in basic and acidic residues. The segment at 1 to 14 (MPRRKQEQPKRLPS) is mediates direct interaction with RBBP4. Positions 1–77 (MPRRKQEQPK…DTSLGSTTPS (77 aa)) are disordered. Positions 3–5 (RRK) match the RRK motif; mediates NuRD recruitment to telomeres motif. The segment covering 62-77 (EQSTSPDTSLGSTTPS) has biased composition (polar residues). Residues Lys176, Lys216, and Lys226 each participate in a glycyl lysine isopeptide (Lys-Gly) (interchain with G-Cter in SUMO2) cross-link. Disordered regions lie at residues 258–280 (KKVS…SFLS) and 305–348 (EKSS…SLEL). The span at 327–344 (VSPPPPPPPPPPPPPPPQ) shows a compositional bias: pro residues. Residues Lys360 and Lys372 each participate in a glycyl lysine isopeptide (Lys-Gly) (interchain with G-Cter in SUMO2) cross-link. C2H2-type zinc fingers lie at residues 374 to 396 (FQCP…MVIH), 402 to 424 (HQCP…MKVH), and 433 to 455 (FQCQ…MRCH). Glycyl lysine isopeptide (Lys-Gly) (interchain with G-Cter in SUMO2) cross-links involve residues Lys466, Lys475, Lys523, Lys549, Lys580, Lys587, and Lys597. Residues 525 to 553 (EPKEDNGLPTSFTLNTADRPANHTKLKDP) form a disordered region. The span at 616–627 (VFSPESEVSTPG) shows a compositional bias: polar residues. The segment at 616–640 (VFSPESEVSTPGVSEDALKPQEGKG) is disordered. The span at 631–640 (DALKPQEGKG) shows a compositional bias: basic and acidic residues. Glycyl lysine isopeptide (Lys-Gly) (interchain with G-Cter in SUMO2) cross-links involve residues Lys634, Lys639, and Lys658. Lys673 is covalently cross-linked (Glycyl lysine isopeptide (Lys-Gly) (interchain with G-Cter in SUMO1); alternate). Lys673 participates in a covalent cross-link: Glycyl lysine isopeptide (Lys-Gly) (interchain with G-Cter in SUMO2); alternate. Residues Lys704, Lys710, Lys742, Lys778, and Lys798 each participate in a glycyl lysine isopeptide (Lys-Gly) (interchain with G-Cter in SUMO2) cross-link. C2H2-type zinc fingers lie at residues 817 to 839 (FPCD…LSLH) and 845 to 867 (YKCH…LTVH). Glycyl lysine isopeptide (Lys-Gly) (interchain with G-Cter in SUMO2) cross-links involve residues Lys870 and Lys891. 2 consecutive C2H2-type zinc fingers follow at residues 897-919 (YSCH…MSLH) and 929-952 (ICCT…GTKH). The segment covering 947–960 (HIGTKHTGEDRKTP) has biased composition (basic and acidic residues). The segment at 947 to 1013 (HIGTKHTGED…GSQPSLNSEE (67 aa)) is disordered. A Glycyl lysine isopeptide (Lys-Gly) (interchain with G-Cter in SUMO2) cross-link involves residue Lys958. Positions 961–978 (SESNSPSSSSLSALSDSA) are enriched in low complexity. Residues 979–988 (NSKDDSDGSQ) show a composition bias toward basic and acidic residues. Lys1014 participates in a covalent cross-link: Glycyl lysine isopeptide (Lys-Gly) (interchain with G-Cter in SUMO2). 2 C2H2-type zinc fingers span residues 1019–1041 (FECV…LQIH) and 1047–1069 (FECD…KKCH).

This sequence belongs to the krueppel C2H2-type zinc-finger protein family. In terms of assembly, part of a transcription inhibitory ribonucleoprotein complex composed at least of the circular RNA circZNF827, HNRNPK and HNRNPL. Interacts with the nucleosome remodeling and histone deacetylase/NuRD complex. Interacts with RBBP4; the interaction is direct and recruits RBBP4, a component of the NuRD complex, to telomeres.

The protein resides in the nucleus. It is found in the chromosome. The protein localises to the telomere. As part of a ribonucleoprotein complex composed at least of HNRNPK, HNRNPL and the circular RNA circZNF827 that nucleates the complex on chromatin, may negatively regulate the transcription of genes involved in neuronal differentiation. Could also recruit the nucleosome remodeling and histone deacetylase/NuRD complex to telomeric regions of chromosomes to regulate chromatin remodeling as part of telomere maintenance. The sequence is that of Zinc finger protein 827 (ZNF827) from Macaca fascicularis (Crab-eating macaque).